The following is a 788-amino-acid chain: Glycerol-3-phosphate acyltransferase (788 aa).

Residues 104–135 are disordered; the sequence is LLPGRDPYHPNPRQQRRILRSDPQRARVMAGE. Residues 271–276 carry the HXXXXD motif motif; that stretch reads SHRSYI.

It belongs to the GPAT/DAPAT family.

It localises to the cell membrane. The catalysed reaction is sn-glycerol 3-phosphate + an acyl-CoA = a 1-acyl-sn-glycero-3-phosphate + CoA. Its pathway is phospholipid metabolism; CDP-diacylglycerol biosynthesis; CDP-diacylglycerol from sn-glycerol 3-phosphate: step 1/3. In Mycobacterium marinum (strain ATCC BAA-535 / M), this protein is Glycerol-3-phosphate acyltransferase.